A 735-amino-acid chain; its full sequence is Stonin-1 (735 aa).

Residues 1-35 are disordered; that stretch reads MCSTNPGKWVTFDDDPAVQSSQKSKNFPLENQGVC. One can recognise an SHD domain in the interval 275 to 408; sequence GWSFMLRIPE…KLPAVSKPKK (134 aa). The MHD domain occupies 412 to 715; it reads EQEISLEIVD…ACYNIQVEIE (304 aa).

Belongs to the Stoned B family. As to expression, ubiquitous.

The protein resides in the cytoplasm. Its subcellular location is the membrane. Its function is as follows. May be involved in the endocytic machinery. The polypeptide is Stonin-1 (STON1) (Homo sapiens (Human)).